The chain runs to 729 residues: Subtilisin-like protease SBT4.3 (729 aa).

The signal sequence occupies residues 1-23 (MAKLSTPLYLICLAFIFTRDVSA). Positions 24 to 109 (NDYRQASSVY…VFPSKSHELT (86 aa)) are cleaved as a propeptide — activation peptide. Residues 32–108 (VYIVYMGTLP…SVFPSKSHEL (77 aa)) enclose the Inhibitor I9 domain. N-linked (GlcNAc...) asparagine glycosylation occurs at asparagine 82. Residues 113–580 (SWDFVGFGEK…SGQINPTKAS (468 aa)) enclose the Peptidase S8 domain. Active-site charge relay system residues include aspartate 139 and histidine 196. N-linked (GlcNAc...) asparagine glycosylation is found at asparagine 275, asparagine 348, asparagine 359, and asparagine 363. Residues 350–436 (TKFPIVYGQN…LGFEDYKSIK (87 aa)) form the PA domain. Residue serine 521 is the Charge relay system of the active site. 3 N-linked (GlcNAc...) asparagine glycosylation sites follow: asparagine 614, asparagine 642, and asparagine 656.

The protein belongs to the peptidase S8 family. The C-terminal propeptide is autocleaved.

It is found in the secreted. The protein is Subtilisin-like protease SBT4.3 of Arabidopsis thaliana (Mouse-ear cress).